The primary structure comprises 644 residues: Far upstream element-binding protein 1 (644 aa).

2 disordered regions span residues 1-31 (MADYSTVPPPSSGSAGGGGGGGGGGGVNDAF) and 44-94 (KIGG…PMHQ). Position 2 is an N-acetylalanine (alanine 2). Residues 14–27 (SAGGGGGGGGGGGV) are compositionally biased toward gly residues. Residues serine 52 and serine 55 each carry the phosphoserine modification. Positions 65 to 77 (RPLEDGDQPDAKK) are enriched in basic and acidic residues. Polar residues predominate over residues 81 to 94 (QNDSFGTQLPPMHQ). KH domains lie at 100–164 (VMTE…KRLL), 185–251 (NAVQ…KEMV), and 275–339 (NEGI…AEII). Serine 140 bears the Phosphoserine mark. Threonine 153 is subject to Phosphothreonine. An omega-N-methylarginine mark is found at arginine 321, arginine 359, arginine 361, and arginine 363. The segment at 346 to 365 (VQAGNPGGPGPGGRGRGRGQ) is disordered. The span at 350-365 (NPGGPGPGGRGRGRGQ) shows a compositional bias: gly residues. The 68-residue stretch at 376 to 443 (LQEFNFIVPT…QQIDYARQLI (68 aa)) folds into the KH 4 domain. Threonine 432 carries the phosphothreonine modification. Disordered stretches follow at residues 447–532 (IGGP…GTDP) and 548–580 (QAQPPPAAPAGAPTTTQTNGQGDQQNPAPAGQV). Over residues 468–505 (PHGPPGPPGPGTPMGPYNPAPYNPGPPGPAPHGPPAPY) the composition is skewed to pro residues. Residues 556 to 573 (PAGAPTTTQTNGQGDQQN) show a composition bias toward low complexity. Residue serine 630 is modified to Phosphoserine.

As to quaternary structure, found in a complex with PUF60 and far upstream element (FUSE) DNA segment. Interacts with PUF60 and JTV1. Post-translationally, ubiquitinated. This targets the protein for proteasome-mediated degradation.

Its subcellular location is the nucleus. In terms of biological role, regulates MYC expression by binding to a single-stranded far-upstream element (FUSE) upstream of the MYC promoter. May act both as activator and repressor of transcription. The sequence is that of Far upstream element-binding protein 1 (FUBP1) from Homo sapiens (Human).